The primary structure comprises 410 residues: Histone-lysine N-methyltransferase SUV39H2 (410 aa).

One can recognise a Chromo domain in the interval 47-105 (YEVEYLCDYKVVKDMEYYLVKWKGWPDSTNTWEPLQNLKCPLLLQQFSNDKHNYLSQVK). A Pre-SET domain is found at 189 to 247 (FGCSCTDCFFQKCCPAEAGVLLAYNKNQQIKIPPGTPIYECNSRCQCGPDCPNRIVQKG). C191, C193, C196, C201, C202, C229, C233, C235, and C239 together coordinate Zn(2+). Positions 250–373 (YSLCIFRTSN…AGEELTFDYQ (124 aa)) constitute an SET domain. S-adenosyl-L-methionine contacts are provided by residues 261–263 (RGW), Y304, and 330–331 (NH). C333 lines the Zn(2+) pocket. Phosphoserine occurs at positions 381, 384, and 388. The region spanning 394 to 410 (VRTVCKCGAVTCRGYLN) is the Post-SET domain. Residues C398, C400, and C405 each coordinate Zn(2+).

Belongs to the class V-like SAM-binding methyltransferase superfamily. Histone-lysine methyltransferase family. Suvar3-9 subfamily. Interacts with SMAD5. The large PER complex involved in the histone methylation is composed of at least PER2, CBX3, TRIM28, SUV39H1 and/or SUV39H2; CBX3 mediates the formation of the complex. Ubiquitinated by the DCX(DCAF13) E3 ubiquitin ligase complex, leading to its degradation.

Its subcellular location is the nucleus. The protein localises to the chromosome. It is found in the centromere. The enzyme catalyses L-lysyl(9)-[histone H3] + 3 S-adenosyl-L-methionine = N(6),N(6),N(6)-trimethyl-L-lysyl(9)-[histone H3] + 3 S-adenosyl-L-homocysteine + 3 H(+). Its function is as follows. Histone methyltransferase that specifically trimethylates 'Lys-9' of histone H3 using monomethylated H3 'Lys-9' as substrate. H3 'Lys-9' trimethylation represents a specific tag for epigenetic transcriptional repression by recruiting HP1 (CBX1, CBX3 and/or CBX5) proteins to methylated histones. Mainly functions in heterochromatin regions, thereby playing a central role in the establishment of constitutive heterochromatin at pericentric and telomere regions. H3 'Lys-9' trimethylation is also required to direct DNA methylation at pericentric repeats. SUV39H1 is targeted to histone H3 via its interaction with RB1 and is involved in many processes, such as cell cycle regulation, transcriptional repression and regulation of telomere length. May participate in regulation of higher-order chromatin organization during spermatogenesis. Recruited by the large PER complex to the E-box elements of the circadian target genes such as PER2 itself or PER1, contributes to the conversion of local chromatin to a heterochromatin-like repressive state through H3 'Lys-9' trimethylation. The sequence is that of Histone-lysine N-methyltransferase SUV39H2 (SUV39H2) from Macaca fascicularis (Crab-eating macaque).